Here is a 206-residue protein sequence, read N- to C-terminus: Octanoyltransferase (206 aa).

A BPL/LPL catalytic domain is found at 30–206 (PETNDEIWLV…EFVTLLNNSI (177 aa)). Residues 69–76 (RGGQVTYH), 137–139 (SLG), and 150–152 (GIA) contribute to the substrate site. Residue Cys168 is the Acyl-thioester intermediate of the active site.

It belongs to the LipB family.

It is found in the cytoplasm. It catalyses the reaction octanoyl-[ACP] + L-lysyl-[protein] = N(6)-octanoyl-L-lysyl-[protein] + holo-[ACP] + H(+). It participates in protein modification; protein lipoylation via endogenous pathway; protein N(6)-(lipoyl)lysine from octanoyl-[acyl-carrier-protein]: step 1/2. Functionally, catalyzes the transfer of endogenously produced octanoic acid from octanoyl-acyl-carrier-protein onto the lipoyl domains of lipoate-dependent enzymes. Lipoyl-ACP can also act as a substrate although octanoyl-ACP is likely to be the physiological substrate. In Francisella tularensis subsp. mediasiatica (strain FSC147), this protein is Octanoyltransferase.